The following is a 329-amino-acid chain: DNA-directed RNA polymerase subunit alpha (329 aa).

Residues 1–235 (MQGFVEDFLK…QQLEAFVDLR (235 aa)) form an alpha N-terminal domain (alpha-NTD) region. The alpha C-terminal domain (alpha-CTD) stretch occupies residues 249 to 329 (FEPVLLRPVD…NWPPKSLLED (81 aa)).

The protein belongs to the RNA polymerase alpha chain family. In terms of assembly, homodimer. The RNAP catalytic core consists of 2 alpha, 1 beta, 1 beta' and 1 omega subunit. When a sigma factor is associated with the core the holoenzyme is formed, which can initiate transcription.

It carries out the reaction RNA(n) + a ribonucleoside 5'-triphosphate = RNA(n+1) + diphosphate. DNA-dependent RNA polymerase catalyzes the transcription of DNA into RNA using the four ribonucleoside triphosphates as substrates. The chain is DNA-directed RNA polymerase subunit alpha from Buchnera aphidicola subsp. Cinara cedri (strain Cc).